We begin with the raw amino-acid sequence, 118 residues long: MKKIKSFGGKSLGGGKQEKILKDFARMQEELQKKIQELEESFSQIEVEASVGGGAVRIVATCDRRVKDIEIDEDLKEDFDTLKDLLIAGMNEVMEKIEKRREEEMSKITQQFGIPGLM.

It belongs to the YbaB/EbfC family. As to quaternary structure, homodimer.

The protein resides in the cytoplasm. The protein localises to the nucleoid. In terms of biological role, binds to DNA and alters its conformation. May be involved in regulation of gene expression, nucleoid organization and DNA protection. The chain is Nucleoid-associated protein TM_0687 from Thermotoga maritima (strain ATCC 43589 / DSM 3109 / JCM 10099 / NBRC 100826 / MSB8).